Here is a 148-residue protein sequence, read N- to C-terminus: SsrA-binding protein (148 aa).

This sequence belongs to the SmpB family.

Its subcellular location is the cytoplasm. Functionally, required for rescue of stalled ribosomes mediated by trans-translation. Binds to transfer-messenger RNA (tmRNA), required for stable association of tmRNA with ribosomes. tmRNA and SmpB together mimic tRNA shape, replacing the anticodon stem-loop with SmpB. tmRNA is encoded by the ssrA gene; the 2 termini fold to resemble tRNA(Ala) and it encodes a 'tag peptide', a short internal open reading frame. During trans-translation Ala-aminoacylated tmRNA acts like a tRNA, entering the A-site of stalled ribosomes, displacing the stalled mRNA. The ribosome then switches to translate the ORF on the tmRNA; the nascent peptide is terminated with the 'tag peptide' encoded by the tmRNA and targeted for degradation. The ribosome is freed to recommence translation, which seems to be the essential function of trans-translation. The protein is SsrA-binding protein of Burkholderia ambifaria (strain ATCC BAA-244 / DSM 16087 / CCUG 44356 / LMG 19182 / AMMD) (Burkholderia cepacia (strain AMMD)).